Consider the following 572-residue polypeptide: Hemagglutinin-neuraminidase (572 aa).

Residues 1-31 (MEYWKHTNHGKDAGNELETSMATHGNKLTNK) are Intravirion-facing. The helical transmembrane segment at 32 to 52 (IIYILWTIILVLLSIVFIIVL) threads the bilayer. At 53 to 572 (INSIKSEKAH…FKTEIPKSCS (520 aa)) the chain is on the virion surface side. 2 disulfide bridges follow: C190–C214 and C256–C269. The interval 252 to 257 (NRKSCS) is involved in neuraminidase activity. N308 and N351 each carry an N-linked (GlcNAc...) asparagine; by host glycan. Cystine bridges form between C355/C469 and C463/C473. The N-linked (GlcNAc...) asparagine; by host glycan is linked to N523. A disulfide bridge connects residues C535 and C544.

Belongs to the paramyxoviruses hemagglutinin-neuraminidase family. In terms of assembly, homotetramer; composed of disulfide-linked homodimers. Interacts with F protein trimer.

Its subcellular location is the virion membrane. The protein resides in the host cell membrane. It catalyses the reaction Hydrolysis of alpha-(2-&gt;3)-, alpha-(2-&gt;6)-, alpha-(2-&gt;8)- glycosidic linkages of terminal sialic acid residues in oligosaccharides, glycoproteins, glycolipids, colominic acid and synthetic substrates.. Its function is as follows. Attaches the virus to sialic acid-containing cell receptors and thereby initiating infection. Binding of HN protein to the receptor induces a conformational change that allows the F protein to trigger virion/cell membranes fusion. In terms of biological role, neuraminidase activity ensures the efficient spread of the virus by dissociating the mature virions from the neuraminic acid containing glycoproteins. This is Hemagglutinin-neuraminidase (HN) from Homo sapiens (Human).